The following is a 570-amino-acid chain: Proline--tRNA ligase (570 aa).

Belongs to the class-II aminoacyl-tRNA synthetase family. ProS type 1 subfamily. Homodimer.

The protein localises to the cytoplasm. The enzyme catalyses tRNA(Pro) + L-proline + ATP = L-prolyl-tRNA(Pro) + AMP + diphosphate. Functionally, catalyzes the attachment of proline to tRNA(Pro) in a two-step reaction: proline is first activated by ATP to form Pro-AMP and then transferred to the acceptor end of tRNA(Pro). As ProRS can inadvertently accommodate and process non-cognate amino acids such as alanine and cysteine, to avoid such errors it has two additional distinct editing activities against alanine. One activity is designated as 'pretransfer' editing and involves the tRNA(Pro)-independent hydrolysis of activated Ala-AMP. The other activity is designated 'posttransfer' editing and involves deacylation of mischarged Ala-tRNA(Pro). The misacylated Cys-tRNA(Pro) is not edited by ProRS. The polypeptide is Proline--tRNA ligase (Clostridium perfringens (strain SM101 / Type A)).